Consider the following 545-residue polypeptide: Thermosome subunit (545 aa).

This sequence belongs to the TCP-1 chaperonin family. Forms an oligomeric complex of eight-membered rings.

Molecular chaperone; binds unfolded polypeptides in vitro, and has a weak ATPase activity. This is Thermosome subunit (ths) from Methanopyrus kandleri (strain AV19 / DSM 6324 / JCM 9639 / NBRC 100938).